Reading from the N-terminus, the 418-residue chain is Actin-related protein 3 (418 aa).

Alanine 2 is modified (N-acetylalanine). Residues lysine 240, lysine 244, lysine 251, and lysine 254 each carry the N6-acetyllysine modification.

It belongs to the actin family. ARP3 subfamily. Component of the Arp2/3 complex composed of ACTR2/ARP2, ACTR3/ARP3, ARPC1B/p41-ARC, ARPC2/p34-ARC, ARPC3/p21-ARC, ARPC4/p20-ARC and ARPC5/p16-ARC. Interacts with WHDC1. Interacts weakly with MEFV. Interacts with AVIL. In terms of assembly, (Microbial infection) Interacts with bacterium B.thailandensis BimA.

The protein resides in the cytoplasm. It localises to the cytoskeleton. Its subcellular location is the cell projection. It is found in the nucleus. Its function is as follows. ATP-binding component of the Arp2/3 complex, a multiprotein complex that mediates actin polymerization upon stimulation by nucleation-promoting factor (NPF). The Arp2/3 complex mediates the formation of branched actin networks in the cytoplasm, providing the force for cell motility. Seems to contact the pointed end of the daughter actin filament. In podocytes, required for the formation of lamellipodia downstream of AVIL and PLCE1 regulation. In addition to its role in the cytoplasmic cytoskeleton, the Arp2/3 complex also promotes actin polymerization in the nucleus, thereby regulating gene transcription and repair of damaged DNA. The Arp2/3 complex promotes homologous recombination (HR) repair in response to DNA damage by promoting nuclear actin polymerization, leading to drive motility of double-strand breaks (DSBs). Plays a role in ciliogenesis. This Mus musculus (Mouse) protein is Actin-related protein 3 (Actr3).